The primary structure comprises 240 residues: UDP-2,3-diacylglucosamine hydrolase (240 aa).

Mn(2+) is bound by residues Asp-8, His-10, Asp-41, Asn-79, and His-114. Residue 79–80 (NR) participates in substrate binding. Residues Asp-122, Ser-160, Asn-164, Lys-167, and His-195 each contribute to the substrate site. The Mn(2+) site is built by His-195 and His-197.

Belongs to the LpxH family. The cofactor is Mn(2+).

The protein resides in the cell inner membrane. The catalysed reaction is UDP-2-N,3-O-bis[(3R)-3-hydroxytetradecanoyl]-alpha-D-glucosamine + H2O = 2-N,3-O-bis[(3R)-3-hydroxytetradecanoyl]-alpha-D-glucosaminyl 1-phosphate + UMP + 2 H(+). The protein operates within glycolipid biosynthesis; lipid IV(A) biosynthesis; lipid IV(A) from (3R)-3-hydroxytetradecanoyl-[acyl-carrier-protein] and UDP-N-acetyl-alpha-D-glucosamine: step 4/6. In terms of biological role, hydrolyzes the pyrophosphate bond of UDP-2,3-diacylglucosamine to yield 2,3-diacylglucosamine 1-phosphate (lipid X) and UMP by catalyzing the attack of water at the alpha-P atom. Involved in the biosynthesis of lipid A, a phosphorylated glycolipid that anchors the lipopolysaccharide to the outer membrane of the cell. This chain is UDP-2,3-diacylglucosamine hydrolase, found in Klebsiella pneumoniae subsp. pneumoniae (strain ATCC 700721 / MGH 78578).